The following is a 266-amino-acid chain: Small ribosomal subunit protein eS1 (266 aa).

The tract at residues 234–266 (EGGTGTATKATGDDTGAKVERADGYEPPIQETV) is disordered. The segment covering 244–257 (TGDDTGAKVERADG) has biased composition (basic and acidic residues).

Belongs to the eukaryotic ribosomal protein eS1 family. As to quaternary structure, component of the small ribosomal subunit. Mature ribosomes consist of a small (40S) and a large (60S) subunit. The 40S subunit contains about 33 different proteins and 1 molecule of RNA (18S). The 60S subunit contains about 49 different proteins and 3 molecules of RNA (28S, 5.8S and 5S). Part of the small subunit (SSU) processome, composed of more than 70 proteins and the RNA chaperone small nucleolar RNA (snoRNA) U3.

The protein resides in the cytoplasm. The protein localises to the nucleus. It is found in the nucleolus. In terms of biological role, component of the small ribosomal subunit. The ribosome is a large ribonucleoprotein complex responsible for the synthesis of proteins in the cell. Part of the small subunit (SSU) processome, first precursor of the small eukaryotic ribosomal subunit. During the assembly of the SSU processome in the nucleolus, many ribosome biogenesis factors, an RNA chaperone and ribosomal proteins associate with the nascent pre-rRNA and work in concert to generate RNA folding, modifications, rearrangements and cleavage as well as targeted degradation of pre-ribosomal RNA by the RNA exosome. May play a role during erythropoiesis. The protein is Small ribosomal subunit protein eS1 (rps3a) of Solea senegalensis (Senegalese sole).